A 365-amino-acid chain; its full sequence is UDP-N-acetylglucosamine--N-acetylmuramyl-(pentapeptide) pyrophosphoryl-undecaprenol N-acetylglucosamine transferase (365 aa).

UDP-N-acetyl-alpha-D-glucosamine contacts are provided by residues 20–22 (TGG), Asn-132, Arg-168, Ser-196, Ile-253, and Gln-298.

The protein belongs to the glycosyltransferase 28 family. MurG subfamily.

The protein resides in the cell inner membrane. The catalysed reaction is di-trans,octa-cis-undecaprenyl diphospho-N-acetyl-alpha-D-muramoyl-L-alanyl-D-glutamyl-meso-2,6-diaminopimeloyl-D-alanyl-D-alanine + UDP-N-acetyl-alpha-D-glucosamine = di-trans,octa-cis-undecaprenyl diphospho-[N-acetyl-alpha-D-glucosaminyl-(1-&gt;4)]-N-acetyl-alpha-D-muramoyl-L-alanyl-D-glutamyl-meso-2,6-diaminopimeloyl-D-alanyl-D-alanine + UDP + H(+). It functions in the pathway cell wall biogenesis; peptidoglycan biosynthesis. Cell wall formation. Catalyzes the transfer of a GlcNAc subunit on undecaprenyl-pyrophosphoryl-MurNAc-pentapeptide (lipid intermediate I) to form undecaprenyl-pyrophosphoryl-MurNAc-(pentapeptide)GlcNAc (lipid intermediate II). In Ralstonia nicotianae (strain ATCC BAA-1114 / GMI1000) (Ralstonia solanacearum), this protein is UDP-N-acetylglucosamine--N-acetylmuramyl-(pentapeptide) pyrophosphoryl-undecaprenol N-acetylglucosamine transferase.